A 216-amino-acid polypeptide reads, in one-letter code: Protein Syd (216 aa).

The protein belongs to the Syd family.

It localises to the cell inner membrane. Interacts with the SecY protein in vivo. May bind preferentially to an uncomplexed state of SecY, thus functioning either as a chelating agent for excess SecY in the cell or as a regulatory factor that negatively controls the translocase function. The sequence is that of Protein Syd from Shewanella baltica (strain OS185).